The sequence spans 149 residues: Large ribosomal subunit protein uL13 (149 aa).

This sequence belongs to the universal ribosomal protein uL13 family. Part of the 50S ribosomal subunit.

Functionally, this protein is one of the early assembly proteins of the 50S ribosomal subunit, although it is not seen to bind rRNA by itself. It is important during the early stages of 50S assembly. This chain is Large ribosomal subunit protein uL13, found in Bifidobacterium longum (strain DJO10A).